The sequence spans 380 residues: Alpha-glucoside transport system permease protein AglG (380 aa).

The next 6 helical transmembrane spans lie at 13 to 33, 179 to 199, 202 to 222, 239 to 259, 288 to 308, and 344 to 364; these read VHLSVLLLVLLWTLPTAGLLI, VIPILIAAFAAYALAWMPFPG, VLLAVVVGLLVVPLQMSLIPL, TYMGIWLAHTGFGLPLAIYLL, IILPLSFPALASFAIFQFLWT, and EILTASAFITIVVPLIVFFAL. The 198-residue stretch at 167–364 folds into the ABC transmembrane type-1 domain; sequence FLNSLTVAVP…VVPLIVFFAL (198 aa).

Belongs to the binding-protein-dependent transport system permease family. MalFG subfamily.

It localises to the cell inner membrane. Its function is as follows. Part of the binding-protein-dependent transport system for alpha-glucosides such as sucrose, maltose and trehalose. Probably responsible for the translocation of the substrate across the membrane. In Rhizobium meliloti (strain 1021) (Ensifer meliloti), this protein is Alpha-glucoside transport system permease protein AglG (aglG).